The primary structure comprises 806 residues: Leucine--tRNA ligase (806 aa).

The 'HIGH' region motif lies at 40–51 (PYPSGAGLHVGH). A 'KMSKS' region motif is present at residues 576–580 (KMSKS). Residue lysine 579 coordinates ATP.

This sequence belongs to the class-I aminoacyl-tRNA synthetase family.

The protein localises to the cytoplasm. It carries out the reaction tRNA(Leu) + L-leucine + ATP = L-leucyl-tRNA(Leu) + AMP + diphosphate. This is Leucine--tRNA ligase from Halalkalibacterium halodurans (strain ATCC BAA-125 / DSM 18197 / FERM 7344 / JCM 9153 / C-125) (Bacillus halodurans).